The chain runs to 152 residues: S-ribosylhomocysteine lyase (152 aa).

Positions 53, 57, and 120 each coordinate Fe cation.

The protein belongs to the LuxS family. Homodimer. Requires Fe cation as cofactor.

It catalyses the reaction S-(5-deoxy-D-ribos-5-yl)-L-homocysteine = (S)-4,5-dihydroxypentane-2,3-dione + L-homocysteine. Functionally, involved in the synthesis of autoinducer 2 (AI-2) which is secreted by bacteria and is used to communicate both the cell density and the metabolic potential of the environment. The regulation of gene expression in response to changes in cell density is called quorum sensing. Catalyzes the transformation of S-ribosylhomocysteine (RHC) to homocysteine (HC) and 4,5-dihydroxy-2,3-pentadione (DPD). The sequence is that of S-ribosylhomocysteine lyase from Enterococcus faecalis (strain ATCC 700802 / V583).